Consider the following 355-residue polypeptide: Eukaryotic initiation factor 4A-13 (355 aa).

The Q motif signature appears at 40 to 68 (DSFDAMGLQENLLRGIYAYGFEKPSAIQQ). Residues 71–241 (IVPFCKGLDV…RKFMNQPVRI (171 aa)) form the Helicase ATP-binding domain. 84–91 (AQSGTGKT) lines the ATP pocket. Residues 189-192 (DEAD) carry the DEAD box motif. Positions 252 to 355 (GIKQFYVNVD…QQVSLVINYD (104 aa)) constitute a Helicase C-terminal domain.

This sequence belongs to the DEAD box helicase family. eIF4A subfamily. In terms of assembly, eIF4F is a multi-subunit complex, the composition of which varies with external and internal environmental conditions. It is composed of at least EIF4A, EIF4E and EIF4G.

It catalyses the reaction ATP + H2O = ADP + phosphate + H(+). In terms of biological role, ATP-dependent RNA helicase which is a subunit of the eIF4F complex involved in cap recognition and is required for mRNA binding to ribosome. In the current model of translation initiation, eIF4A unwinds RNA secondary structures in the 5'-UTR of mRNAs which is necessary to allow efficient binding of the small ribosomal subunit, and subsequent scanning for the initiator codon. In Nicotiana tabacum (Common tobacco), this protein is Eukaryotic initiation factor 4A-13.